The primary structure comprises 670 residues: CLK4-associating serine/arginine rich protein (670 aa).

S101 bears the Phosphoserine mark. Disordered regions lie at residues 171–232 and 258–670; these read TVAE…GMAD and EKAM…HYRH. Residues 182 to 214 are compositionally biased toward acidic residues; it reads PEEEESPAEEESNSDEDEVIPDIDVEVDVDELN. Over residues 265–283 the composition is skewed to basic residues; the sequence is RRSRRQRREFREKRLRGRK. A phosphoserine mark is found at S285 and S294. Basic and acidic residues predominate over residues 290 to 313; it reads ARRDSPTYDPYKRSPSESSSESRS. T327 carries the post-translational modification Phosphothreonine. Phosphoserine occurs at positions 331 and 335. Residues 340 to 355 show a composition bias toward low complexity; the sequence is AAAAAAAAASGAATGK. Over residues 356–365 the composition is skewed to pro residues; it reads PPAPPQPGGP. Positions 378 to 400 are enriched in low complexity; that stretch reads STSSSSSSASRTSSSRSRSSSSS. Composition is skewed to basic residues over residues 411–443 and 481–491; these read SGRH…RRHS and RGGRGPRHHSS. The segment covering 492 to 529 has biased composition (low complexity); it reads SRSSWSLSPSRSRSLTRSRSPSLSRSRSLSRSRSQSHS. S543 bears the Phosphoserine mark. At T569 the chain carries Phosphothreonine. The stretch at 581 to 643 forms a coiled coil; it reads ALNRQFKADK…ERQYSRQSRS (63 aa). 2 stretches are compositionally biased toward basic and acidic residues: residues 586–613 and 621–637; these read FKAD…ELRA and KERE…ERQY. The span at 638–647 shows a compositional bias: low complexity; it reads SRQSRSPSPR. Positions 655-670 are enriched in basic residues; sequence SRRRSRSRSRSPHYRH.

Belongs to the splicing factor SR family. In terms of assembly, probably interacts with CLK4. In terms of processing, phosphorylated in vitro by CLK4.

It is found in the nucleus. In terms of biological role, probably functions as an alternative splicing regulator. May regulate the mRNA splicing of genes such as CLK1. May act by regulating members of the CLK kinase family. This chain is CLK4-associating serine/arginine rich protein (CLASRP), found in Bos taurus (Bovine).